Reading from the N-terminus, the 397-residue chain is F-box protein At3g28330 (397 aa).

Residues 6-56 (KKDMDFLTEDLWEIILARLPLKSIITTPKLVCKVWKSIIESRCFRDLFQSL) form the F-box domain.

In Arabidopsis thaliana (Mouse-ear cress), this protein is F-box protein At3g28330.